We begin with the raw amino-acid sequence, 420 residues long: Serine hydroxymethyltransferase (420 aa).

(6S)-5,6,7,8-tetrahydrofolate is bound by residues Leu-121 and 125 to 127 (GHL). The residue at position 230 (Lys-230) is an N6-(pyridoxal phosphate)lysine. 354–356 (SPF) contributes to the (6S)-5,6,7,8-tetrahydrofolate binding site.

It belongs to the SHMT family. In terms of assembly, homodimer. Requires pyridoxal 5'-phosphate as cofactor.

Its subcellular location is the cytoplasm. The catalysed reaction is (6R)-5,10-methylene-5,6,7,8-tetrahydrofolate + glycine + H2O = (6S)-5,6,7,8-tetrahydrofolate + L-serine. It functions in the pathway one-carbon metabolism; tetrahydrofolate interconversion. The protein operates within amino-acid biosynthesis; glycine biosynthesis; glycine from L-serine: step 1/1. Catalyzes the reversible interconversion of serine and glycine with tetrahydrofolate (THF) serving as the one-carbon carrier. This reaction serves as the major source of one-carbon groups required for the biosynthesis of purines, thymidylate, methionine, and other important biomolecules. Also exhibits THF-independent aldolase activity toward beta-hydroxyamino acids, producing glycine and aldehydes, via a retro-aldol mechanism. The sequence is that of Serine hydroxymethyltransferase from Rickettsia africae (strain ESF-5).